The sequence spans 305 residues: Homoserine O-acetyltransferase (305 aa).

The active-site Acyl-thioester intermediate is cysteine 142. Positions 163 and 192 each coordinate substrate. Histidine 235 (proton acceptor) is an active-site residue. Glutamate 237 is an active-site residue. Arginine 249 contributes to the substrate binding site.

The protein belongs to the MetA family.

It localises to the cytoplasm. The catalysed reaction is L-homoserine + acetyl-CoA = O-acetyl-L-homoserine + CoA. The protein operates within amino-acid biosynthesis; L-methionine biosynthesis via de novo pathway; O-acetyl-L-homoserine from L-homoserine: step 1/1. Transfers an acetyl group from acetyl-CoA to L-homoserine, forming acetyl-L-homoserine. The chain is Homoserine O-acetyltransferase from Roseobacter denitrificans (strain ATCC 33942 / OCh 114) (Erythrobacter sp. (strain OCh 114)).